The primary structure comprises 469 residues: Glutamate--tRNA ligase (469 aa).

Positions 11–21 (PSPTGFIHLGN) match the 'HIGH' region motif. The span at 118–131 (GEKPRYDGTWRPEP) shows a compositional bias: basic and acidic residues. Residues 118-139 (GEKPRYDGTWRPEPGKVLPEPP) are disordered. Residues 243–247 (KMSKR) carry the 'KMSKS' region motif. Lys246 is an ATP binding site.

This sequence belongs to the class-I aminoacyl-tRNA synthetase family. Glutamate--tRNA ligase type 1 subfamily. As to quaternary structure, monomer.

It localises to the cytoplasm. It catalyses the reaction tRNA(Glu) + L-glutamate + ATP = L-glutamyl-tRNA(Glu) + AMP + diphosphate. In terms of biological role, catalyzes the attachment of glutamate to tRNA(Glu) in a two-step reaction: glutamate is first activated by ATP to form Glu-AMP and then transferred to the acceptor end of tRNA(Glu). The polypeptide is Glutamate--tRNA ligase (Burkholderia pseudomallei (strain 668)).